The chain runs to 473 residues: MLRNSNMRWRLPLICFVWEIAMIVLFGIFVRYNDEADPHWPIFMKHENITSDIENDFYFRYPSFQDVHVMIFVGFGFLMTFLQRYGFGSVAFNFLLAAFGIQWALLMQGWFHTFVNGKILIGVESLINADFCVGSVCIAFGGVLGKVSPVQIMLMTLFQVTLFAVNEWILLNKLHVIDAGGSMTIHTFGAYFGLTVAWILSRPKLKQNNDKEGSTYISDLFSMIGTLFLWMYWPSFNSAISYHGDAQHRAAINTYCSLAACVLTTVAISSVVNKKGKLEMVHIQNATLAGGVAVGTAAEMMLTPYGSLIVGFICGIVSTLGFTYLSPILSNKLRLHDTCGIHNLHAIPGLIGGIVGAVTAACATEGVYTAEGLKKMFHFEGEYADRTPSIQGIYQAAGIGVSLAFGIVGGTVVGCILKLPIWGDPSDENCFDDDVYWELREEDEEEHLGAANQYITHLPENFKLPDRTEISFK.

Residues 1–9 (MLRNSNMRW) are Cytoplasmic-facing. The chain crosses the membrane as a helical span at residues 10 to 30 (RLPLICFVWEIAMIVLFGIFV). Residues 31–61 (RYNDEADPHWPIFMKHENITSDIENDFYFRY) lie on the Extracellular side of the membrane. Residue Asn-48 is glycosylated (N-linked (GlcNAc...) asparagine). A helical membrane pass occupies residues 62–82 (PSFQDVHVMIFVGFGFLMTFL). Over 83–86 (QRYG) the chain is Cytoplasmic. Residues 87-107 (FGSVAFNFLLAAFGIQWALLM) form a helical membrane-spanning segment. Residues 108–125 (QGWFHTFVNGKILIGVES) are Extracellular-facing. A helical membrane pass occupies residues 126–145 (LINADFCVGSVCIAFGGVLG). The Cytoplasmic segment spans residues 146 to 151 (KVSPVQ). A helical transmembrane segment spans residues 152-171 (IMLMTLFQVTLFAVNEWILL). Over 172-179 (NKLHVIDA) the chain is Extracellular. Residues 180–200 (GGSMTIHTFGAYFGLTVAWIL) traverse the membrane as a helical segment. Over 201–219 (SRPKLKQNNDKEGSTYISD) the chain is Cytoplasmic. Residues 220 to 240 (LFSMIGTLFLWMYWPSFNSAI) traverse the membrane as a helical segment. At 241–251 (SYHGDAQHRAA) the chain is on the extracellular side. A helical transmembrane segment spans residues 252-272 (INTYCSLAACVLTTVAISSVV). Residues 273-285 (NKKGKLEMVHIQN) lie on the Cytoplasmic side of the membrane. The chain crosses the membrane as a helical span at residues 286-306 (ATLAGGVAVGTAAEMMLTPYG). A topological domain (extracellular) is located at residue Ser-307. A helical transmembrane segment spans residues 308–328 (LIVGFICGIVSTLGFTYLSPI). The Cytoplasmic segment spans residues 329 to 343 (LSNKLRLHDTCGIHN). A helical transmembrane segment spans residues 344–364 (LHAIPGLIGGIVGAVTAACAT). The Extracellular segment spans residues 365 to 396 (EGVYTAEGLKKMFHFEGEYADRTPSIQGIYQA). Residues 397-417 (AGIGVSLAFGIVGGTVVGCIL) form a helical membrane-spanning segment. Residues 418–473 (KLPIWGDPSDENCFDDDVYWELREEDEEEHLGAANQYITHLPENFKLPDRTEISFK) are Cytoplasmic-facing.

It belongs to the ammonium transporter (TC 2.A.49) family. Rh subfamily. Homotrimer.

Its subcellular location is the apical cell membrane. Its function is as follows. Functions as an ammonia transporter. This chain is Ammonium transporter Rh type C (rhcg), found in Xenopus laevis (African clawed frog).